The chain runs to 1227 residues: Pesticidal crystal protein Cry1Be (1227 aa).

This sequence belongs to the delta endotoxin family.

Its function is as follows. Promotes colloidosmotic lysis by binding to the midgut epithelial cells of many lepidopteran larvae. In Bacillus thuringiensis, this protein is Pesticidal crystal protein Cry1Be (cry1Be).